A 352-amino-acid polypeptide reads, in one-letter code: tRNA pseudouridine synthase D (352 aa).

Catalysis depends on D81, which acts as the Nucleophile. Residues 157-303 (GVPNYFGTQR…MDHERRILRL (147 aa)) form the TRUD domain.

This sequence belongs to the pseudouridine synthase TruD family.

It carries out the reaction uridine(13) in tRNA = pseudouridine(13) in tRNA. Responsible for synthesis of pseudouridine from uracil-13 in transfer RNAs. This is tRNA pseudouridine synthase D from Pseudomonas putida (strain ATCC 700007 / DSM 6899 / JCM 31910 / BCRC 17059 / LMG 24140 / F1).